Consider the following 413-residue polypeptide: S-adenosylmethionine synthase (413 aa).

ATP is bound at residue His15. Asp17 is a Mg(2+) binding site. K(+) is bound at residue Glu43. Residues Glu56 and Gln100 each contribute to the L-methionine site. Positions 100-110 are flexible loop; that stretch reads QSPDISQGVNE. Residues 171–173, 248–249, Asp257, 263–264, Ala280, and Lys284 each bind ATP; these read DGK, KF, and RK. Asp257 is a binding site for L-methionine. Lys288 provides a ligand contact to L-methionine.

Belongs to the AdoMet synthase family. As to quaternary structure, homotetramer; dimer of dimers. Requires Mg(2+) as cofactor. K(+) serves as cofactor.

It is found in the cytoplasm. The catalysed reaction is L-methionine + ATP + H2O = S-adenosyl-L-methionine + phosphate + diphosphate. The protein operates within amino-acid biosynthesis; S-adenosyl-L-methionine biosynthesis; S-adenosyl-L-methionine from L-methionine: step 1/1. Its function is as follows. Catalyzes the formation of S-adenosylmethionine (AdoMet) from methionine and ATP. The overall synthetic reaction is composed of two sequential steps, AdoMet formation and the subsequent tripolyphosphate hydrolysis which occurs prior to release of AdoMet from the enzyme. This chain is S-adenosylmethionine synthase, found in Prochlorococcus marinus (strain AS9601).